A 103-amino-acid chain; its full sequence is Large ribosomal subunit protein bL32m (103 aa).

The N-terminal 47 residues, 1–47, are a transit peptide targeting the mitochondrion; that stretch reads MALLRGNSLAISQKMLSVFQASALPHISLRIFISPPSIANIWNSILL. Residues cysteine 77, cysteine 80, cysteine 90, and cysteine 93 each contribute to the Zn(2+) site.

It belongs to the bacterial ribosomal protein bL32 family. As to quaternary structure, component of the mitochondrial large ribosomal subunit (mt-LSU). Mature yeast 74S mitochondrial ribosomes consist of a small (37S) and a large (54S) subunit. The 37S small subunit contains a 15S ribosomal RNA (15S mt-rRNA) and at least 32 different proteins. The 54S large subunit contains a 21S rRNA (21S mt-rRNA) and at least 45 different proteins. bL32m has a zinc binding site. In terms of processing, MRPL32 precursor is processed by the m-AAA protease, which cleaves the N-terminal transit peptide. Cleavage by the m-AAA protease takes place prior to assembly into the large subunit, an essential step for mitochondrial ribosome (mitoribosome) assembly. Proper processing by the m-AAA protease is dependent on the zinc-binding region within the tightly folded C-terminal domain of MRPL32: zinc-dependent folding halts degradation initiated from the N-terminus and triggers the release of mature mrpl32.

It localises to the mitochondrion. Component of the mitochondrial ribosome (mitoribosome), a dedicated translation machinery responsible for the synthesis of mitochondrial genome-encoded proteins, including at least some of the essential transmembrane subunits of the mitochondrial respiratory chain. The mitoribosomes are attached to the mitochondrial inner membrane and translation products are cotranslationally integrated into the membrane. The sequence is that of Large ribosomal subunit protein bL32m (mrpl32) from Schizosaccharomyces pombe (strain 972 / ATCC 24843) (Fission yeast).